The primary structure comprises 81 residues: Cortexin-2 (81 aa).

The helical transmembrane segment at 29-49 (TGFAFVGILCIFLGLLIIRCF) threads the bilayer.

This sequence belongs to the cortexin family.

Its subcellular location is the membrane. In Mus musculus (Mouse), this protein is Cortexin-2 (Ctxn2).